A 531-amino-acid chain; its full sequence is MKVKRPVLLAILDGWGISEPDKGNAVDNANMVFVEYLKKTYPWLKAHASGKWVGLPENQMGNSEVGHIHLGAGRINLESLAKLNHETKTNNIAKNDEIVKTFEYVKKNNSALHLMGLFSNGGVHSHFDHMIAIYKAAIDYGITNIKFDLITDGRDTKPKLAYDFIKDLLELIKQNNNIGIISSISGRYYAMDRDKRFDRSRIAYNAIVNRNNVRSFTNILDYIQQEYMINHDDEMIIPAFNQDDLNGNLKANDAIIMTNFRPDRAIQISSILTNKNYIAWQNEAFSDAEFIGDKIRFVSMMKYSDSVTSPHIAYPPKPLTNTLGQYLSQLGLKQLRIAETEKIAHVTFFFDGGNDYFKNGLAKNDEITLANAYIDLIPSAKVATYDLKPQMSAVEITDKLLEEIKKDEFDFIVLNFANCDMVGHTGNNKATEIACKTLDEQLKRIHEEFVLRHNGIMVITADHGNAEIMIDKDGQVNKKHTTSLVPIIITDLNIKLKQNDPEIAKVAPTILDLMNIEIPKEMELESMIDHN.

Mn(2+) contacts are provided by Asp-13 and Ser-63. Catalysis depends on Ser-63, which acts as the Phosphoserine intermediate. Substrate-binding positions include His-124, 154-155, Arg-187, Arg-193, 261-264, and Lys-342; these read RD and RPDR. Mn(2+)-binding residues include Asp-420, His-424, Asp-462, His-463, and His-480.

This sequence belongs to the BPG-independent phosphoglycerate mutase family. In terms of assembly, monomer. Mn(2+) serves as cofactor.

The catalysed reaction is (2R)-2-phosphoglycerate = (2R)-3-phosphoglycerate. It functions in the pathway carbohydrate degradation; glycolysis; pyruvate from D-glyceraldehyde 3-phosphate: step 3/5. Catalyzes the interconversion of 2-phosphoglycerate and 3-phosphoglycerate. This Mycoplasma mycoides subsp. mycoides SC (strain CCUG 32753 / NCTC 10114 / PG1) protein is 2,3-bisphosphoglycerate-independent phosphoglycerate mutase.